We begin with the raw amino-acid sequence, 171 residues long: Ribosome maturation factor RimM (171 aa).

The 75-residue stretch at 96 to 170 (AEGEYYYHEI…LVTIHVMEGL (75 aa)) folds into the PRC barrel domain.

The protein belongs to the RimM family. As to quaternary structure, binds ribosomal protein uS19.

The protein localises to the cytoplasm. Its function is as follows. An accessory protein needed during the final step in the assembly of 30S ribosomal subunit, possibly for assembly of the head region. Essential for efficient processing of 16S rRNA. May be needed both before and after RbfA during the maturation of 16S rRNA. It has affinity for free ribosomal 30S subunits but not for 70S ribosomes. In Bacillus cereus (strain G9842), this protein is Ribosome maturation factor RimM.